Consider the following 504-residue polypeptide: UDP-GalNAc:beta-1,3-N-acetylgalactosaminyltransferase 2 (504 aa).

Residues methionine 1–asparagine 3 are Cytoplasmic-facing. A helical; Signal-anchor for type II membrane protein membrane pass occupies residues tryptophan 4–leucine 24. Residues arginine 25–arginine 504 are Lumenal-facing. 2 N-linked (GlcNAc...) asparagine glycosylation sites follow: asparagine 117 and asparagine 176.

Belongs to the glycosyltransferase 31 family. In terms of processing, N-glycosylated. In terms of tissue distribution, present in testis (at protein level). In testis, it is mainly detected in the middle layers of seminiferous tubules at stages XII to II. Strongly expressed in primary and secondary spermatocytes and early round spermatids, but not in spermatogonia, elongating or elongated spermatids, or in Leydig or Sertoli cells.

The protein localises to the golgi apparatus membrane. The protein resides in the endoplasmic reticulum. The enzyme catalyses 3-O-(N-acetyl-beta-D-glucosaminyl-(1-&gt;4)-alpha-D-mannosyl)-L-threonyl-[protein] + UDP-N-acetyl-alpha-D-galactosamine = 3-O-[beta-D-GalNAc-(1-&gt;3)-beta-D-GlcNAc-(1-&gt;4)-alpha-D-Man]-L-Thr-[protein] + UDP + H(+). The protein operates within protein modification; protein glycosylation. Functionally, beta-1,3-N-acetylgalactosaminyltransferase that synthesizes a unique carbohydrate structure, GalNAc-beta-1-3GlcNAc, on N- and O-glycans. Has no galactose nor galactosaminyl transferase activity toward any acceptor substrate. Involved in alpha-dystroglycan (DAG1) glycosylation: acts coordinately with GTDC2/POMGnT2 to synthesize a GalNAc-beta3-GlcNAc-beta-terminus at the 4-position of protein O-mannose in the biosynthesis of the phosphorylated O-mannosyl trisaccharide (N-acetylgalactosamine-beta-3-N-acetylglucosamine-beta-4-(phosphate-6-)mannose), a carbohydrate structure present in alpha-dystroglycan, which is required for binding laminin G-like domain-containing extracellular proteins with high affinity. In Mus musculus (Mouse), this protein is UDP-GalNAc:beta-1,3-N-acetylgalactosaminyltransferase 2 (B3galnt2).